Reading from the N-terminus, the 37-residue chain is Large ribosomal subunit protein bL36 (37 aa).

Belongs to the bacterial ribosomal protein bL36 family.

This is Large ribosomal subunit protein bL36 from Mycobacterium ulcerans (strain Agy99).